Here is a 60-residue protein sequence, read N- to C-terminus: Large ribosomal subunit protein uL30 (60 aa).

This sequence belongs to the universal ribosomal protein uL30 family. In terms of assembly, part of the 50S ribosomal subunit.

This chain is Large ribosomal subunit protein uL30, found in Carboxydothermus hydrogenoformans (strain ATCC BAA-161 / DSM 6008 / Z-2901).